Here is a 314-residue protein sequence, read N- to C-terminus: D-alanine--D-alanine ligase (314 aa).

An ATP-grasp domain is found at 112–307 (KQVWQSLGLP…FQQLVLSILD (196 aa)). 138-193 (AQMLGFPLIVKPAHEGSSIGMAKVGDVAELIAAWRAASAYDAQVLVEQWIQGPEFT) provides a ligand contact to ATP. Mg(2+) contacts are provided by aspartate 261, glutamate 274, and asparagine 276.

This sequence belongs to the D-alanine--D-alanine ligase family. It depends on Mg(2+) as a cofactor. The cofactor is Mn(2+).

The protein resides in the cytoplasm. It catalyses the reaction 2 D-alanine + ATP = D-alanyl-D-alanine + ADP + phosphate + H(+). It functions in the pathway cell wall biogenesis; peptidoglycan biosynthesis. Functionally, cell wall formation. The polypeptide is D-alanine--D-alanine ligase (Stutzerimonas stutzeri (strain A1501) (Pseudomonas stutzeri)).